The primary structure comprises 337 residues: Phosphate acyltransferase (337 aa).

This sequence belongs to the PlsX family. In terms of assembly, homodimer. Probably interacts with PlsY.

Its subcellular location is the cytoplasm. It catalyses the reaction a fatty acyl-[ACP] + phosphate = an acyl phosphate + holo-[ACP]. The protein operates within lipid metabolism; phospholipid metabolism. Catalyzes the reversible formation of acyl-phosphate (acyl-PO(4)) from acyl-[acyl-carrier-protein] (acyl-ACP). This enzyme utilizes acyl-ACP as fatty acyl donor, but not acyl-CoA. This is Phosphate acyltransferase from Listeria monocytogenes serotype 4b (strain F2365).